We begin with the raw amino-acid sequence, 88 residues long: Apolipoprotein C-I (88 aa).

The N-terminal stretch at 1 to 26 is a signal peptide; it reads MRLILSLPVLAVVLAMVLEGPAPAQA.

Belongs to the apolipoprotein C1 family.

The protein localises to the secreted. Functionally, inhibitor of lipoprotein binding to the low density lipoprotein (LDL) receptor, LDL receptor-related protein, and very low density lipoprotein (VLDL) receptor. Associates with high density lipoproteins (HDL) and the triacylglycerol-rich lipoproteins in the plasma and makes up about 10% of the protein of the VLDL and 2% of that of HDL. Appears to interfere directly with fatty acid uptake and is also the major plasma inhibitor of cholesteryl ester transfer protein (CETP). Binds free fatty acids and reduces their intracellular esterification. Modulates the interaction of APOE with beta-migrating VLDL and inhibits binding of beta-VLDL to the LDL receptor-related protein. The chain is Apolipoprotein C-I (APOC1) from Cynopterus brachyotis (Lesser short-nosed fruit bat).